Consider the following 231-residue polypeptide: Large ribosomal subunit protein uL1 (231 aa).

Belongs to the universal ribosomal protein uL1 family. Part of the 50S ribosomal subunit.

Functionally, binds directly to 23S rRNA. The L1 stalk is quite mobile in the ribosome, and is involved in E site tRNA release. Its function is as follows. Protein L1 is also a translational repressor protein, it controls the translation of the L11 operon by binding to its mRNA. This is Large ribosomal subunit protein uL1 from Alkalilimnicola ehrlichii (strain ATCC BAA-1101 / DSM 17681 / MLHE-1).